A 146-amino-acid polypeptide reads, in one-letter code: Cyanate hydratase (146 aa).

Residues arginine 87, glutamate 90, and serine 113 contribute to the active site.

It belongs to the cyanase family.

It catalyses the reaction cyanate + hydrogencarbonate + 3 H(+) = NH4(+) + 2 CO2. In terms of biological role, catalyzes the reaction of cyanate with bicarbonate to produce ammonia and carbon dioxide. The polypeptide is Cyanate hydratase (Teredinibacter turnerae (strain ATCC 39867 / T7901)).